The primary structure comprises 321 residues: Lipoyl synthase (321 aa).

Cys-68, Cys-73, Cys-79, Cys-94, Cys-98, Cys-101, and Ser-308 together coordinate [4Fe-4S] cluster. The 218-residue stretch at 80 to 297 folds into the Radical SAM core domain; sequence FNHGTATFMI…KEEALAMGFT (218 aa).

Belongs to the radical SAM superfamily. Lipoyl synthase family. [4Fe-4S] cluster is required as a cofactor.

The protein resides in the cytoplasm. The catalysed reaction is [[Fe-S] cluster scaffold protein carrying a second [4Fe-4S](2+) cluster] + N(6)-octanoyl-L-lysyl-[protein] + 2 oxidized [2Fe-2S]-[ferredoxin] + 2 S-adenosyl-L-methionine + 4 H(+) = [[Fe-S] cluster scaffold protein] + N(6)-[(R)-dihydrolipoyl]-L-lysyl-[protein] + 4 Fe(3+) + 2 hydrogen sulfide + 2 5'-deoxyadenosine + 2 L-methionine + 2 reduced [2Fe-2S]-[ferredoxin]. It functions in the pathway protein modification; protein lipoylation via endogenous pathway; protein N(6)-(lipoyl)lysine from octanoyl-[acyl-carrier-protein]: step 2/2. Its function is as follows. Catalyzes the radical-mediated insertion of two sulfur atoms into the C-6 and C-8 positions of the octanoyl moiety bound to the lipoyl domains of lipoate-dependent enzymes, thereby converting the octanoylated domains into lipoylated derivatives. The polypeptide is Lipoyl synthase (Photorhabdus laumondii subsp. laumondii (strain DSM 15139 / CIP 105565 / TT01) (Photorhabdus luminescens subsp. laumondii)).